Here is a 95-residue protein sequence, read N- to C-terminus: Small ribosomal subunit protein bS6 (95 aa).

This sequence belongs to the bacterial ribosomal protein bS6 family.

In terms of biological role, binds together with bS18 to 16S ribosomal RNA. The sequence is that of Small ribosomal subunit protein bS6 from Clostridium perfringens (strain ATCC 13124 / DSM 756 / JCM 1290 / NCIMB 6125 / NCTC 8237 / Type A).